The following is a 303-amino-acid chain: Aspartate carbamoyltransferase catalytic subunit (303 aa).

2 residues coordinate carbamoyl phosphate: Arg-51 and Thr-52. Lys-80 is an L-aspartate binding site. Carbamoyl phosphate is bound by residues Arg-101, His-129, and Gln-132. The L-aspartate site is built by Arg-162 and Arg-221. Leu-260 and Pro-261 together coordinate carbamoyl phosphate.

It belongs to the aspartate/ornithine carbamoyltransferase superfamily. ATCase family. In terms of assembly, heterooligomer of catalytic and regulatory chains.

It carries out the reaction carbamoyl phosphate + L-aspartate = N-carbamoyl-L-aspartate + phosphate + H(+). It participates in pyrimidine metabolism; UMP biosynthesis via de novo pathway; (S)-dihydroorotate from bicarbonate: step 2/3. Its function is as follows. Catalyzes the condensation of carbamoyl phosphate and aspartate to form carbamoyl aspartate and inorganic phosphate, the committed step in the de novo pyrimidine nucleotide biosynthesis pathway. The sequence is that of Aspartate carbamoyltransferase catalytic subunit from Saccharolobus islandicus (strain M.14.25 / Kamchatka #1) (Sulfolobus islandicus).